The sequence spans 247 residues: Transmembrane protein 33 (247 aa).

Ala2 bears the N-acetylalanine mark. The Lumenal segment spans residues 2–31; the sequence is ADTTPNGPQGAGAVQFMMTNKLDTAMWLSR. The helical transmembrane segment at 32 to 52 threads the bilayer; sequence LFTVYCSALFVLPLLGLHEAA. The Cytoplasmic portion of the chain corresponds to 53-100; the sequence is SFYQRALLANALTSALRLHQRLPHFQLSRAFLAQALLEDSCHYLLYSL. A helical membrane pass occupies residues 101–121; it reads IFVNSYPVTMSIFPVLLFSLL. Topologically, residues 122 to 155 are lumenal; the sequence is HAATYTKKVLDARGSNSLPLLRSVLDKLSANQQN. A helical membrane pass occupies residues 156–176; it reads ILKFIACNEIFLMPATVFMLF. Residues 177-247 are Cytoplasmic-facing; it reads SGQGSLLQPF…FISRLAPTVP (71 aa).

Belongs to the PER33/POM33 family. As to quaternary structure, interacts with EIF2AK3. Interacts with ARL6IP1, isoform RTN1-A of RTN1, isoform RTN2-B of RTN2, isoform 3 of RTN3 and isoform 3 of RTN4. Interacts with RNF5. Interacts with RNF26. Interacts with PKD2. In terms of tissue distribution, prostate cancer and several cancer cell lines (at protein level). Widely expressed. Expressed at higher levels in endocrine-resistant breast cancer cells as compared to endocrine-sensitive breast cancer cells. Expressed at higher levels in early recurrence breast cancer tissues as compared to non-recurrent breast tumors.

It is found in the endoplasmic reticulum membrane. It localises to the melanosome. Its subcellular location is the nucleus envelope. In terms of biological role, acts as a regulator of the tubular endoplasmic reticulum (ER) network by modulating intracellular calcium homeostasis. Mechanistically, stimulates PKD2 calcium-dependent activity. Suppresses the RTN3/4-induced formation of the ER tubules. Positively regulates PERK-mediated and IRE1-mediated unfolded protein response signaling. Plays an essential role in VEGF-mediated release of Ca(2+) from ER stores during angiogenesis. Also plays a role in the modulation of innate immune signaling through the cGAS-STING pathway by interacting with RNF26. Participates in lipid metabolism by acting as a downstream effector of the pyruvate kinase/PKM. Forms a complex with RNF5 to facilitate polyubiquitination and subsequent degradation of SCAP on the ER membrane. The polypeptide is Transmembrane protein 33 (TMEM33) (Homo sapiens (Human)).